The sequence spans 419 residues: Serine hydroxymethyltransferase (419 aa).

(6S)-5,6,7,8-tetrahydrofolate-binding positions include leucine 122 and 126–128; that span reads GHL. Residue lysine 231 is modified to N6-(pyridoxal phosphate)lysine. 354-356 provides a ligand contact to (6S)-5,6,7,8-tetrahydrofolate; it reads SPF.

Belongs to the SHMT family. In terms of assembly, homodimer. It depends on pyridoxal 5'-phosphate as a cofactor.

Its subcellular location is the cytoplasm. It catalyses the reaction (6R)-5,10-methylene-5,6,7,8-tetrahydrofolate + glycine + H2O = (6S)-5,6,7,8-tetrahydrofolate + L-serine. It functions in the pathway one-carbon metabolism; tetrahydrofolate interconversion. It participates in amino-acid biosynthesis; glycine biosynthesis; glycine from L-serine: step 1/1. Catalyzes the reversible interconversion of serine and glycine with tetrahydrofolate (THF) serving as the one-carbon carrier. This reaction serves as the major source of one-carbon groups required for the biosynthesis of purines, thymidylate, methionine, and other important biomolecules. Also exhibits THF-independent aldolase activity toward beta-hydroxyamino acids, producing glycine and aldehydes, via a retro-aldol mechanism. This is Serine hydroxymethyltransferase from Exiguobacterium sibiricum (strain DSM 17290 / CCUG 55495 / CIP 109462 / JCM 13490 / 255-15).